The primary structure comprises 152 residues: Ribosome maturation factor RimP (152 aa).

Belongs to the RimP family.

The protein resides in the cytoplasm. Its function is as follows. Required for maturation of 30S ribosomal subunits. The polypeptide is Ribosome maturation factor RimP (Burkholderia cenocepacia (strain ATCC BAA-245 / DSM 16553 / LMG 16656 / NCTC 13227 / J2315 / CF5610) (Burkholderia cepacia (strain J2315))).